Consider the following 156-residue polypeptide: Small ribosomal subunit protein uS7 (156 aa).

This sequence belongs to the universal ribosomal protein uS7 family. As to quaternary structure, part of the 30S ribosomal subunit. Contacts proteins S9 and S11.

One of the primary rRNA binding proteins, it binds directly to 16S rRNA where it nucleates assembly of the head domain of the 30S subunit. Is located at the subunit interface close to the decoding center, probably blocks exit of the E-site tRNA. The chain is Small ribosomal subunit protein uS7 from Maridesulfovibrio salexigens (strain ATCC 14822 / DSM 2638 / NCIMB 8403 / VKM B-1763) (Desulfovibrio salexigens).